The chain runs to 159 residues: Phosphopantetheine adenylyltransferase (159 aa).

Residue threonine 10 coordinates substrate. ATP contacts are provided by residues 10–11 (TF) and histidine 18. Positions 42, 74, and 88 each coordinate substrate. ATP-binding positions include 89–91 (GLR), glutamate 99, and 124–130 (WSFISSS).

The protein belongs to the bacterial CoaD family. Homohexamer. Mg(2+) is required as a cofactor.

It is found in the cytoplasm. It carries out the reaction (R)-4'-phosphopantetheine + ATP + H(+) = 3'-dephospho-CoA + diphosphate. It functions in the pathway cofactor biosynthesis; coenzyme A biosynthesis; CoA from (R)-pantothenate: step 4/5. Its function is as follows. Reversibly transfers an adenylyl group from ATP to 4'-phosphopantetheine, yielding dephospho-CoA (dPCoA) and pyrophosphate. This is Phosphopantetheine adenylyltransferase from Enterobacter sp. (strain 638).